Here is a 205-residue protein sequence, read N- to C-terminus: High frequency lysogenization protein HflD homolog (205 aa).

The protein belongs to the HflD family.

Its subcellular location is the cytoplasm. It localises to the cell inner membrane. This chain is High frequency lysogenization protein HflD homolog, found in Photobacterium profundum (strain SS9).